A 212-amino-acid polypeptide reads, in one-letter code: Leucyl/phenylalanyl-tRNA--protein transferase (212 aa).

Belongs to the L/F-transferase family.

The protein localises to the cytoplasm. The catalysed reaction is N-terminal L-lysyl-[protein] + L-leucyl-tRNA(Leu) = N-terminal L-leucyl-L-lysyl-[protein] + tRNA(Leu) + H(+). It catalyses the reaction N-terminal L-arginyl-[protein] + L-leucyl-tRNA(Leu) = N-terminal L-leucyl-L-arginyl-[protein] + tRNA(Leu) + H(+). The enzyme catalyses L-phenylalanyl-tRNA(Phe) + an N-terminal L-alpha-aminoacyl-[protein] = an N-terminal L-phenylalanyl-L-alpha-aminoacyl-[protein] + tRNA(Phe). Its function is as follows. Functions in the N-end rule pathway of protein degradation where it conjugates Leu, Phe and, less efficiently, Met from aminoacyl-tRNAs to the N-termini of proteins containing an N-terminal arginine or lysine. The sequence is that of Leucyl/phenylalanyl-tRNA--protein transferase from Paracoccus denitrificans (strain Pd 1222).